The following is a 211-amino-acid chain: MIERTFIAENVSETLIDEYFKGKLVRAGYSHLELKKTPIGTRITVFAEKPGFVIGRKGKMVKELTDTLTEVYKVENPQIEVKPLETPDLDPAIVGHKIAASLEKGMHFRKTAHSAVRRVMAAGAKGVAIIISGKLSGERSRTEKFMDGYMKHCGEPAEELVIKSHQLAKLKLGIVGVTVKIMRPDVSLPDEIIILSGEIKEVTEFSEVSQE.

The KH type-2 domain occupies 16-85 (IDEYFKGKLV…NPQIEVKPLE (70 aa)).

The protein belongs to the universal ribosomal protein uS3 family. In terms of assembly, part of the 30S ribosomal subunit.

Binds the lower part of the 30S subunit head. The sequence is that of Small ribosomal subunit protein uS3 from Methanococcus vannielii (strain ATCC 35089 / DSM 1224 / JCM 13029 / OCM 148 / SB).